The sequence spans 442 residues: U11/U12 small nuclear ribonucleoprotein 65 kDa protein (442 aa).

An RRM 1 domain is found at 28–102 (VTLLVRHLPD…KVLQVQRANK (75 aa)). Disordered regions lie at residues 101–138 (NKPNDNKKSRQIEESVTKGNAFSTVSTNNDSKSGQILS), 200–242 (LALP…GRKR), and 290–317 (SKVTQDEYKEESENEDPADEPKEKDSNL). A compositionally biased stretch (basic and acidic residues) spans 102–116 (KPNDNKKSRQIEESV). Positions 117–136 (TKGNAFSTVSTNNDSKSGQI) are enriched in polar residues. A compositionally biased stretch (pro residues) spans 200 to 209 (LALPTPPLPK). The segment covering 297 to 307 (YKEESENEDPA) has biased composition (acidic residues). Residues 352–434 (VVLYIKNLAK…KPMIIQFGRT (83 aa)) enclose the RRM 2 domain.

In terms of assembly, component of the U11/U12 snRNPs that are part of the U12-type spliceosome. Forms a complex with U12 snRNA. As to expression, ubiquitous.

The protein localises to the nucleus. In terms of biological role, component of minor spliceosome required for U12-type intron splicing and alternative splicing of many introns. Binds specifically to U12 snRNA, which is necessary for branch-point site recognition. Required for normal plant development. The sequence is that of U11/U12 small nuclear ribonucleoprotein 65 kDa protein (SNRNP65) from Arabidopsis thaliana (Mouse-ear cress).